Here is a 51-residue protein sequence, read N- to C-terminus: Small, acid-soluble spore protein K (51 aa).

The interval 1-51 is disordered; the sequence is MRNKAKGFPNPISFNGNKANNADEHASKRPDGTTRDRPQERMRSSNHFNSL. Residues 21–43 show a composition bias toward basic and acidic residues; that stretch reads NADEHASKRPDGTTRDRPQERMR.

The protein belongs to the SspK family.

The protein resides in the spore core. This is Small, acid-soluble spore protein K from Shouchella clausii (strain KSM-K16) (Alkalihalobacillus clausii).